Here is a 75-residue protein sequence, read N- to C-terminus: Penaeidin-3m (75 aa).

The signal sequence occupies residues 1-19 (MRLVVCLVFLASFALVCQG). Residue Gln20 is modified to Pyrrolidone carboxylic acid. 3 cysteine pairs are disulfide-bonded: Cys44–Cys59, Cys48–Cys66, and Cys60–Cys67. Ser74 carries the serine amide modification.

It belongs to the penaeidin family.

It is found in the cytoplasmic granule. Antibacterial and antifungal activity. Presents chitin-binding activity. This Penaeus setiferus (Atlantic white shrimp) protein is Penaeidin-3m.